A 175-amino-acid polypeptide reads, in one-letter code: Endothelin-2 (175 aa).

Residues 1-21 (MVSAWCSIALALLLALHEGKG) form the signal peptide. A propeptide spanning residues 22–43 (QAAATLEQPASAPKGRGPHLRF) is cleaved from the precursor. 2 disulfide bridges follow: C46/C60 and C48/C56. The propeptide occupies 67 to 175 (VNTAGQTAPY…IPAYSRWRKR (109 aa)). Residues 93–108 (CECSTAGDSACATFCH) form an endothelin-like region.

Belongs to the endothelin/sarafotoxin family.

The protein resides in the secreted. Vasoconstrictor. The chain is Endothelin-2 (Edn2) from Mus musculus (Mouse).